We begin with the raw amino-acid sequence, 325 residues long: Aldo-keto reductase family 1 member A1 (325 aa).

Threonine 2 is modified (N-acetylthreonine). Serine 4 is modified (phosphoserine). NADP(+)-binding positions include 11–20 (GQKMPLIGLG), threonine 21, and tryptophan 22. A glycan (N-linked (Glc) (glycation) lysine) is linked at lysine 23. Residue serine 38 is modified to Phosphoserine. Aspartate 45 lines the NADP(+) pocket. Tyrosine 50 functions as the Proton donor in the catalytic mechanism. N-linked (Glc) (glycation) lysine glycans are attached at residues lysine 68 and lysine 85. Position 127 is an N6-acetyllysine; alternate (lysine 127). Lysine 127 carries the N6-succinyllysine; alternate modification. The N-linked (Glc) (glycation) lysine glycan is linked to lysine 141. N6-succinyllysine is present on lysine 145. Lysine 153 is a glycosylation site (N-linked (Glc) (glycation) lysine). Positions 162, 163, 211, 213, 215, 216, 263, 264, 265, 266, 269, 272, and 273 each coordinate NADP(+). Residue serine 211 is modified to Phosphoserine.

Belongs to the aldo/keto reductase family. As to quaternary structure, monomer. In terms of tissue distribution, widely expressed.

It localises to the cytoplasm. It is found in the cytosol. Its subcellular location is the apical cell membrane. The catalysed reaction is a primary alcohol + NADP(+) = an aldehyde + NADPH + H(+). It carries out the reaction L-gulonate + NADP(+) = aldehydo-D-glucuronate + NADPH + H(+). It catalyses the reaction L-gulono-1,4-lactone + NADP(+) = D-glucurono-3,6-lactone + NADPH + H(+). The enzyme catalyses allyl alcohol + NADP(+) = acrolein + NADPH + H(+). The catalysed reaction is glycerol + NADP(+) = D-glyceraldehyde + NADPH + H(+). It carries out the reaction glycerol + NADP(+) = L-glyceraldehyde + NADPH + H(+). It catalyses the reaction hydroxyacetone + NADP(+) = methylglyoxal + NADPH + H(+). The enzyme catalyses 3-deoxyfructose + NADP(+) = 3-deoxyglucosone + NADPH + H(+). The catalysed reaction is (R)-mevalonate + NADP(+) = (R)-mevaldate + NADPH + H(+). It carries out the reaction pyridine 3-methanol + NADP(+) = pyridine-3-carbaldehyde + NADPH + H(+). It catalyses the reaction S-nitroso-CoA + NADPH + H(+) = sulfinamide-CoA + NADP(+). The enzyme catalyses S-nitrosoglutathione + NADPH + H(+) = S-(hydroxysulfenamide)glutathione + NADP(+). Its function is as follows. Catalyzes the NADPH-dependent reduction of a wide variety of carbonyl-containing compounds to their corresponding alcohols. Displays enzymatic activity towards endogenous metabolites such as aromatic and aliphatic aldehydes, ketones, monosaccharides and bile acids. Plays an important role in ascorbic acid biosynthesis by catalyzing the reduction of D-glucuronic acid and D-glucurono-gamma-lactone. Functions as a detoxifiying enzyme by reducing a range of toxic aldehydes. Reduces methylglyoxal and 3-deoxyglucosone, which are present at elevated levels under hyperglycemic conditions and are cytotoxic. Involved also in the detoxification of lipid-derived aldehydes like acrolein. Plays a role in the activation of procarcinogens, such as polycyclic aromatic hydrocarbon trans-dihydrodiols, and in the metabolism of various xenobiotics and drugs. Also acts as an inhibitor of protein S-nitrosylation by mediating degradation of S-nitroso-coenzyme A (S-nitroso-CoA), a cofactor required to S-nitrosylate proteins. S-nitroso-CoA reductase activity is involved in reprogramming intermediary metabolism in renal proximal tubules, notably by inhibiting protein S-nitrosylation of isoform 2 of PKM (PKM2). Also acts as a S-nitroso-glutathione reductase by catalyzing the NADPH-dependent reduction of S-nitrosoglutathione. Displays no reductase activity towards retinoids. The protein is Aldo-keto reductase family 1 member A1 (Akr1a1) of Rattus norvegicus (Rat).